We begin with the raw amino-acid sequence, 26 residues long: Thrombin-like enzyme LmrSP-3 (26 aa).

It belongs to the peptidase S1 family. Snake venom subfamily. In terms of tissue distribution, expressed by the venom gland.

The protein resides in the secreted. Its function is as follows. Thrombin-like snake venom serine protease that cleaves alpha-chain of fibrinogen (FGA) releases only fibrinopeptide A. Shows coagulant, esterase and amidase activities. The chain is Thrombin-like enzyme LmrSP-3 from Lachesis muta rhombeata (Bushmaster).